The primary structure comprises 104 residues: Iron-sulfur cluster assembly protein CyaY (104 aa).

Belongs to the frataxin family.

Its function is as follows. Involved in iron-sulfur (Fe-S) cluster assembly. May act as a regulator of Fe-S biogenesis. This Tolumonas auensis (strain DSM 9187 / NBRC 110442 / TA 4) protein is Iron-sulfur cluster assembly protein CyaY.